A 336-amino-acid chain; its full sequence is MSALNKKSFLTYLKEGGIYVVLLVLLAIIIFQDPTFLSLLNLSNILTQSSVRIIIALGVAGLIVTQGTDLSAGRQVGLAAVVAATLLQSMDNANKVFPEMATMPIALVILIVCAIGAVIGLINGLIIAYLNVTPFITTLGTMIIVYGINSLYYDFVGASPISGFDSGFSTFAQGFVALGSFRLSYITFYALIAVAFVWVLWNKTRFGKNIFAIGGNPEAAKVSGVNVGLNLLMIYALSGVFYAFGGMLEAGRIGSATNNLGFMYELDAIAACVVGGVSFSGGVGTVIGVVTGVIIFTVINYGLTYIGVNPYWQYIIKGAIIIFAVALDSLKYARKK.

Residues 1–16 (MSALNKKSFLTYLKEG) lie on the Periplasmic side of the membrane. The chain crosses the membrane as a helical span at residues 17-37 (GIYVVLLVLLAIIIFQDPTFL). Over 38–52 (SLLNLSNILTQSSVR) the chain is Cytoplasmic. The chain crosses the membrane as a helical span at residues 53–73 (IIIALGVAGLIVTQGTDLSAG). Topologically, residues 74 to 106 (RQVGLAAVVAATLLQSMDNANKVFPEMATMPIA) are periplasmic. A run of 2 helical transmembrane segments spans residues 107-127 (LVIL…GLII) and 128-148 (AYLN…VYGI). Topologically, residues 149–180 (NSLYYDFVGASPISGFDSGFSTFAQGFVALGS) are periplasmic. A helical transmembrane segment spans residues 181 to 201 (FRLSYITFYALIAVAFVWVLW). The Cytoplasmic portion of the chain corresponds to 202-226 (NKTRFGKNIFAIGGNPEAAKVSGVN). The helical transmembrane segment at 227–247 (VGLNLLMIYALSGVFYAFGGM) threads the bilayer. Topologically, residues 248-256 (LEAGRIGSA) are periplasmic. Residues 257–277 (TNNLGFMYELDAIAACVVGGV) traverse the membrane as a helical segment. Position 278 (Ser278) is a topological domain, cytoplasmic. The helical transmembrane segment at 279 to 299 (FSGGVGTVIGVVTGVIIFTVI) threads the bilayer. Topologically, residues 300–305 (NYGLTY) are periplasmic. The helical transmembrane segment at 306–326 (IGVNPYWQYIIKGAIIIFAVA) threads the bilayer. Topologically, residues 327 to 336 (LDSLKYARKK) are cytoplasmic.

Belongs to the binding-protein-dependent transport system permease family. AraH/RbsC subfamily. The complex is composed of one ATP-binding protein (MglA), two transmembrane proteins (MglC) and a solute-binding protein (MglB).

Its subcellular location is the cell inner membrane. Functionally, part of the ABC transporter complex MglABC involved in galactose/methyl galactoside import. Probably responsible for the translocation of the substrate across the membrane. The sequence is that of Galactose/methyl galactoside import permease protein MglC (mglC) from Escherichia coli (strain K12).